Reading from the N-terminus, the 118-residue chain is Late cornified envelope protein 1F (118 aa).

A compositionally biased stretch (low complexity) spans 1 to 10 (MSCQQSQQQC). Disordered regions lie at residues 1 to 23 (MSCQQSQQQCQPPPKCTPKCPPK) and 82 to 118 (RRRSHRHRPQSSDCCSQPSAGSSCCGGGSGQHSGGCC). Residues 11–23 (QPPPKCTPKCPPK) show a composition bias toward pro residues. Residues 95 to 104 (CCSQPSAGSS) show a composition bias toward low complexity. Residues 105-118 (CCGGGSGQHSGGCC) are compositionally biased toward gly residues.

Belongs to the LCE family. Skin-specific. Expression was readily detected in adult trunk skin, adult arm skin, fetal skin, penal skin, vulva, esophagus and tongue. Not expressed in the cervix, rectum, lung, colon, or placenta. Expression is observed in the fibroblasts.

Its function is as follows. Precursors of the cornified envelope of the stratum corneum. The protein is Late cornified envelope protein 1F (LCE1F) of Homo sapiens (Human).